A 101-amino-acid polypeptide reads, in one-letter code: MFVKKGDKVRVIAGKDKGVEAVVVTALPKVNKVIVEGVNIVKKHQKSNSENPQGAIVEKEAPIHVSNVQVLDKNGVAGRVGYKFVDGKKVRYNKKSGEVLD.

The protein belongs to the universal ribosomal protein uL24 family. In terms of assembly, part of the 50S ribosomal subunit.

Functionally, one of two assembly initiator proteins, it binds directly to the 5'-end of the 23S rRNA, where it nucleates assembly of the 50S subunit. Its function is as follows. One of the proteins that surrounds the polypeptide exit tunnel on the outside of the subunit. The chain is Large ribosomal subunit protein uL24 from Streptococcus suis (strain 98HAH33).